Here is a 181-residue protein sequence, read N- to C-terminus: UPF0398 protein LMHCC_0668 (181 aa).

Belongs to the UPF0398 family.

The sequence is that of UPF0398 protein LMHCC_0668 from Listeria monocytogenes serotype 4a (strain HCC23).